A 156-amino-acid chain; its full sequence is DNA gyrase inhibitor (156 aa).

The protein belongs to the DNA gyrase inhibitor family. In terms of assembly, interacts with DNA gyrase.

The protein localises to the cytoplasm. In terms of biological role, inhibits the supercoiling activity of DNA gyrase. Acts by inhibiting DNA gyrase at an early step, prior to (or at the step of) binding of DNA by the gyrase. It protects cells against toxins that target DNA gyrase, by inhibiting activity of these toxins and reducing the formation of lethal double-strand breaks in the cell. This Serratia proteamaculans (strain 568) protein is DNA gyrase inhibitor.